The sequence spans 228 residues: Cytochrome P450 monooxygenase ataY (228 aa).

Residue Cys-216 coordinates heme.

It belongs to the cytochrome P450 family. Heme serves as cofactor.

It participates in mycotoxin biosynthesis. Its function is as follows. Cytochrome P450 monooxygenase; part of the gene cluster that mediates the biosynthesis of acetylaranotin, a member of the epipolythiodioxopiperazine (ETP) class of toxins characterized by a disulfide-bridged cyclic dipeptide. The first step of acetylaranotin biosynthesis is performed by the NRPS ataP which produces diketopiperazine cyclo-L-Phe-L-Phe via the condensation of 2 phenylalanines (L-Phe). The ataC domain of ataTC then catalyzes the formation of bishydroxylation of cyclo-L-Phe-L-Phe. The glutathione S-transferase domain ataG in ataIMG further catalyzes the conjugation of two glutathiones to the bishydroxylated intermediate. Next, the dipeptidase ataJ removes the Glu residues. The following step is performed by the carbon sulfur lyase domain ataI of ataIMG which may convert the bis-cysteinyl adduct to yield an epidithiol intermediate. The ataT domain from ataTC then catalyzes the oxidation of the free dithiols, followed by a cyclization step catalyzed by the cytochrome P450 ataF. AtaF probably acts as an epoxidase to promote a dual epoxidation formation at C8 and C9 along with C8' and C9', followed by the spontaneous nucleophilic attack of the amide nitrogens N10 and N10' to yield an intermediate with the pyrrolidine partial structure. The final steps of acetylaranotin biosynthesis involve the acetylation and ring rearrangement of an epitetrathiodiketopiperazine intermediate to produce acetylaranotin. AtaH probably catalyzes the acetylation of epitetrathiodiketopiperazine to produce a diacetate and ataY is responsible for the formation of the dihydrooxepin moiety that converts the diacetate intermediate to acetylaranotin via acetylapoaranotin. Both enzymes could function independently in the absence of the other. The acetylaranotin bis-thiomethyltransferase ataS located outside of acetylaranotin gene cluster is the main thiomethyltransferase responsible for converting acetylaranotin and its related intermediates to their methylated forms. This Aspergillus terreus (strain NIH 2624 / FGSC A1156) protein is Cytochrome P450 monooxygenase ataY.